Here is a 365-residue protein sequence, read N- to C-terminus: Probable UDP-arabinopyranose mutase 1 (365 aa).

The short motif at 100–102 (DDD) is the DXD motif element. N-linked (Glc...) arginine glycosylation occurs at Arg-148.

This sequence belongs to the RGP family. As to quaternary structure, homopentamer or homohexamer. Requires Mn(2+) as cofactor. Mg(2+) is required as a cofactor. Post-translationally, reversibly glycosylated by UDP-glucose, UDP-xylose and UDP-galactose, but not UDP-mannose. Expressed in all tissues tested, including root, tuber, leaf, petiole, shoot, stolon and stem.

It is found in the secreted. The protein localises to the cell wall. It localises to the cell junction. The protein resides in the plasmodesma. Its subcellular location is the golgi apparatus. The catalysed reaction is UDP-beta-L-arabinofuranose = UDP-beta-L-arabinopyranose. Its function is as follows. Probable UDP-L-arabinose mutase involved in the biosynthesis of cell wall non-cellulosic polysaccharides. Was initially shown to possess an autoglycosylating activity which is dependent on the presence of UDP-glucose and manganese. The sequence is that of Probable UDP-arabinopyranose mutase 1 from Solanum tuberosum (Potato).